The sequence spans 251 residues: MTIQLINESSNTEKFQQICDKWRLVHDRSAILALVLTDERLELRKLDEPKLGAIAVNFVDGTMAHRRKFGGGRGEAVAKAVGIKGDYLPTIIDATAGLGRDAFVLASVGCKVLLVERNPIVAALLEDGLVRAYADPEIGAFMQERMILADVRNISLLDVAQQAADVVYLDPMYPHKQKSALVKKEMRVFQHLVGADLDSDNFFVPAKALARKRVVVKRPDYAPFLAEQKPDFSQTTKNHRFDVYLSHLKSA.

S-adenosyl-L-methionine contacts are provided by residues 100–101 (RD), 116–117 (ER), and Asp170.

It belongs to the methyltransferase superfamily. RsmJ family.

It is found in the cytoplasm. It carries out the reaction guanosine(1516) in 16S rRNA + S-adenosyl-L-methionine = N(2)-methylguanosine(1516) in 16S rRNA + S-adenosyl-L-homocysteine + H(+). Specifically methylates the guanosine in position 1516 of 16S rRNA. In Actinobacillus pleuropneumoniae serotype 5b (strain L20), this protein is Ribosomal RNA small subunit methyltransferase J.